The primary structure comprises 67 residues: Large ribosomal subunit protein bL32 (67 aa).

The disordered stretch occupies residues 1–44; it reads MAVQQNRKSPSKRDMRRSHDALGFSTLSTDSKSGERHRRHHVTK. The segment covering 11–20 has biased composition (basic and acidic residues); that stretch reads SKRDMRRSHD.

The protein belongs to the bacterial ribosomal protein bL32 family.

The chain is Large ribosomal subunit protein bL32 from Dichelobacter nodosus (strain VCS1703A).